Consider the following 440-residue polypeptide: Transposon Ty1-JR2 Gag polyprotein (440 aa).

Residues 1–16 (MESQQLSQHSHISHGS) are compositionally biased toward low complexity. Disordered stretches follow at residues 1 to 93 (MESQ…MMTQ), 126 to 173 (PQSQ…RPPP), and 352 to 440 (GSRN…PETY). Composition is skewed to polar residues over residues 48 to 60 (TKAN…TPAS), 71 to 93 (SPQT…MMTQ), and 127 to 152 (QSQF…GNTF). Over residues 153–165 (TDSSSADSDMTST) the composition is skewed to low complexity. Positions 299–401 (NNGIHINNKV…NSKSKTARAH (103 aa)) are RNA-binding. Low complexity predominate over residues 402–418 (NVSTSNNSPSTDNDSIS). At S416 the chain carries Phosphoserine. Residues 419–428 (KSTTEPIQLN) are compositionally biased toward polar residues. The segment covering 429-440 (NKHDLHLRPETY) has biased composition (basic and acidic residues).

As to quaternary structure, homotrimer.

The protein localises to the cytoplasm. Capsid protein (CA) is the structural component of the virus-like particle (VLP), forming the shell that encapsulates the retrotransposons dimeric RNA genome. The particles are assembled from trimer-clustered units and there are holes in the capsid shells that allow for the diffusion of macromolecules. CA also has nucleocapsid-like chaperone activity, promoting primer tRNA(i)-Met annealing to the multipartite primer-binding site (PBS), dimerization of Ty1 RNA and initiation of reverse transcription. The chain is Transposon Ty1-JR2 Gag polyprotein (TY1A-JR2) from Saccharomyces cerevisiae (strain ATCC 204508 / S288c) (Baker's yeast).